Reading from the N-terminus, the 77-residue chain is Probable [Fe-S]-dependent transcriptional repressor (77 aa).

The iron-sulfur cluster site is built by Cys54, Cys59, Cys62, and Cys68.

The protein belongs to the FeoC family.

In terms of biological role, may function as a transcriptional regulator that controls feoABC expression. The protein is Probable [Fe-S]-dependent transcriptional repressor of Proteus mirabilis (strain HI4320).